A 245-amino-acid polypeptide reads, in one-letter code: DNA polymerase sliding clamp (245 aa).

The protein belongs to the PCNA family. In terms of assembly, homotrimer. The subunits circularize to form a toroid; DNA passes through its center. Replication factor C (RFC) is required to load the toroid on the DNA.

Functionally, sliding clamp subunit that acts as a moving platform for DNA processing. Responsible for tethering the catalytic subunit of DNA polymerase and other proteins to DNA during high-speed replication. This chain is DNA polymerase sliding clamp, found in Methanosarcina acetivorans (strain ATCC 35395 / DSM 2834 / JCM 12185 / C2A).